Consider the following 562-residue polypeptide: Probable tRNA (uracil-O(2)-)-methyltransferase (562 aa).

The interval 520–546 (VSRRQQTNPKKQEATNRPKQPCWMSLN) is disordered. The C3H1-type zinc finger occupies 535 to 562 (NRPKQPCWMSLNHPDGCPLGPESCRYLH).

Belongs to the TRM44 family.

Its subcellular location is the cytoplasm. It carries out the reaction uridine(44) in tRNA(Ser) + S-adenosyl-L-methionine = 2'-O-methyluridine(44) in tRNA(Ser) + S-adenosyl-L-homocysteine + H(+). In terms of biological role, probable adenosyl-L-methionine (AdoMet)-dependent tRNA (uracil-O(2)-)-methyltransferase. The chain is Probable tRNA (uracil-O(2)-)-methyltransferase from Caenorhabditis briggsae.